The following is a 206-amino-acid chain: Large ribosomal subunit protein uL4 (206 aa).

Residues 47–94 (NRAQKGRSEIAKSTRKPFRQKGTGNARAGMASSPLWRGGGKIFPNSPD) form a disordered region.

It belongs to the universal ribosomal protein uL4 family. As to quaternary structure, part of the 50S ribosomal subunit.

Functionally, one of the primary rRNA binding proteins, this protein initially binds near the 5'-end of the 23S rRNA. It is important during the early stages of 50S assembly. It makes multiple contacts with different domains of the 23S rRNA in the assembled 50S subunit and ribosome. Its function is as follows. Forms part of the polypeptide exit tunnel. The sequence is that of Large ribosomal subunit protein uL4 from Azoarcus sp. (strain BH72).